The following is a 136-amino-acid chain: Large-conductance mechanosensitive channel (136 aa).

The next 2 helical transmembrane spans lie at 9–29 and 79–99; these read AFASRGNVIDMAVGIIIGAAF and IQTVIDFTIIAFAIFMGLKAI.

The protein belongs to the MscL family. Homopentamer.

The protein localises to the cell inner membrane. Its function is as follows. Channel that opens in response to stretch forces in the membrane lipid bilayer. May participate in the regulation of osmotic pressure changes within the cell. The chain is Large-conductance mechanosensitive channel from Shewanella sp. (strain W3-18-1).